The following is a 1044-amino-acid chain: Isoleucine--tRNA ligase (1044 aa).

Positions 48–58 (PFATGLPHFGH) match the 'HIGH' region motif. The 'KMSKS' region signature appears at 594–598 (KMSKS). Lys597 provides a ligand contact to ATP.

The protein belongs to the class-I aminoacyl-tRNA synthetase family. IleS type 2 subfamily. Monomer. It depends on Zn(2+) as a cofactor.

The protein localises to the cytoplasm. It carries out the reaction tRNA(Ile) + L-isoleucine + ATP = L-isoleucyl-tRNA(Ile) + AMP + diphosphate. Catalyzes the attachment of isoleucine to tRNA(Ile). As IleRS can inadvertently accommodate and process structurally similar amino acids such as valine, to avoid such errors it has two additional distinct tRNA(Ile)-dependent editing activities. One activity is designated as 'pretransfer' editing and involves the hydrolysis of activated Val-AMP. The other activity is designated 'posttransfer' editing and involves deacylation of mischarged Val-tRNA(Ile). This is Isoleucine--tRNA ligase from Borrelia turicatae (strain 91E135).